The chain runs to 508 residues: MSEIQRYLQLEISQQQNFLYPLIFQEYIYAFAHDRSFSKSILLENTGYENKFSLLIVKRLITRMYQQNPFIIFPNDSTQNQFFGHNKNFYSPLISEGFAVIVEIPFFIPLIPSLERKKTKIVKSKNLRSIHSIFPFLEDSFSHLNFVLDILISHSVHAEILVQTLRYWVKDASSLHLIRFLLNEYCNWNSFFILKKGSFCFSKRNQRLFLFLYNSHVWEYESIFFFLRNQSSHLESTYSRVLLERISLYGKIEYFVNVFGKVKDFQVNLWLVKDPCMHYVRYQRKSILASRGTSIFITKWKCFLVTFWQWHFSLWFHPRRIYINQLSKTLLEIWGYLSSVQINPSVVRSQILENSFLITNAIKKLDMLVPIIPLIASLANTKFCNVLGHPISKPIRADLSDSHIIGRFGRICRNLSHYHSGSSKKKSLYRIKYILRLSCARTLARKHKSTVRTFLKKSGSKLLEEFLMSEEDVLFLTFPKALSIFGVVYKSRIWYLDILCISDLVNYK.

This sequence belongs to the intron maturase 2 family. MatK subfamily.

The protein resides in the plastid. It localises to the chloroplast. Functionally, usually encoded in the trnK tRNA gene intron. Probably assists in splicing its own and other chloroplast group II introns. This is Maturase K from Collinsia heterophylla (Purple Chinese houses).